Here is a 173-residue protein sequence, read N- to C-terminus: Alpha-crystallin A chain (173 aa).

Met1 bears the N-acetylmethionine mark. The interval 1–63 (MDIAIQHPWF…RTVLDSGISE (63 aa)) is required for complex formation with BFSP1 and BFSP2. Deamidated glutamine; partial is present on Gln6. The residue at position 45 (Ser45) is a Phosphoserine. The residue at position 50 (Gln50) is a Deamidated glutamine; partial. The 111-residue stretch at 52 to 162 (LFRTVLDSGI…GHSERAIPVS (111 aa)) folds into the sHSP domain. N6-acetyllysine is present on Lys70. Gln90 bears the Deamidated glutamine; partial mark. Lys99 is subject to N6-acetyllysine. His100 is a Zn(2+) binding site. Residue Asn101 is modified to Deamidated asparagine; partial. Zn(2+) contacts are provided by Glu102 and His107. Ser122 is modified (phosphoserine). Deamidated asparagine; partial is present on Asn123. The interval 144 to 173 (PKVPSGVDAGHSERAIPVSREEKPSSAPSS) is disordered. Over residues 153–167 (GHSERAIPVSREEKP) the composition is skewed to basic and acidic residues. His154 is a binding site for Zn(2+). O-linked (GlcNAc) serine glycosylation is present at Ser162.

It belongs to the small heat shock protein (HSP20) family. Heteromer composed of three CRYAA and one CRYAB subunits. Inter-subunit bridging via zinc ions enhances stability, which is crucial as there is no protein turn over in the lens. Can also form homodimers and homotetramers (dimers of dimers) which serve as the building blocks of homooligomers. Within homooligomers, the zinc-binding motif is created from residues of 3 different molecules. His-100 and Glu-102 from one molecule are ligands of the zinc ion, and His-107 and His-154 residues from additional molecules complete the site with tetrahedral coordination geometry. Part of a complex required for lens intermediate filament formation composed of BFSP1, BFSP2 and CRYAA. Acetylation at Lys-70 may increase chaperone activity. Post-translationally, undergoes age-dependent proteolytical cleavage at the C-terminus.

It localises to the cytoplasm. Its subcellular location is the nucleus. Functionally, contributes to the transparency and refractive index of the lens. Acts as a chaperone, preventing aggregation of various proteins under a wide range of stress conditions. Required for the correct formation of lens intermediate filaments as part of a complex composed of BFSP1, BFSP2 and CRYAA. This chain is Alpha-crystallin A chain (CRYAA), found in Ovis aries (Sheep).